The sequence spans 216 residues: Somatotropin (216 aa).

Residues 1–26 (MATDSRTSWLLTVSLLCLLWPQEASA) form the signal peptide. Zn(2+) is bound at residue H45. The cysteines at positions 78 and 189 are disulfide-linked. Position 131 is a phosphoserine (S131). Residue E198 coordinates Zn(2+). C206 and C214 are oxidised to a cystine.

Belongs to the somatotropin/prolactin family.

Its subcellular location is the secreted. Plays an important role in growth control. Its major role in stimulating body growth is to stimulate the liver and other tissues to secrete IGF1. It stimulates both the differentiation and proliferation of myoblasts. It also stimulates amino acid uptake and protein synthesis in muscle and other tissues. This Mus musculus (Mouse) protein is Somatotropin (Gh1).